Here is a 110-residue protein sequence, read N- to C-terminus: MSVVIRLARAGTKKRPVYHVVVADSRFPRDGRFIERLGYFNPLMPKDNEARLKLDMEKVKGWLAKGAQPSDRVARFLDTAGVKKREARNNPEKAVPRKERKAQAEAAAKG.

Residues 82–103 (VKKREARNNPEKAVPRKERKAQ) show a composition bias toward basic and acidic residues. The interval 82–110 (VKKREARNNPEKAVPRKERKAQAEAAAKG) is disordered.

It belongs to the bacterial ribosomal protein bS16 family.

This chain is Small ribosomal subunit protein bS16, found in Bradyrhizobium sp. (strain ORS 278).